The following is a 198-amino-acid chain: MLSLEDGTLAVKTARNVIEEYVKTGNYSKFELPKTFDRPGGVFVTLSINHDLRGCIGYPYPMEDMSLGEALADAAMSAATRDPRFPRVHKNELDQIRVEVTILGQPELLKCKPLERPHHIKIGRDGLIIEYGLHKGLLLPQVPVEWHWDATEFLENLCLKAGISPDAWVEEKAKIYTFGGQIFEETEPGGPVIEKKIA.

Residues Glu5–Glu194 enclose the AMMECR1 domain.

The sequence is that of Protein UNCMA_24250 from Methanocella arvoryzae (strain DSM 22066 / NBRC 105507 / MRE50).